Consider the following 329-residue polypeptide: Beta-ketoacyl-[acyl-carrier-protein] synthase III (329 aa).

Active-site residues include C123 and H256. An ACP-binding region spans residues Q257–R261. Residue N286 is part of the active site.

The protein belongs to the thiolase-like superfamily. FabH family. In terms of assembly, homodimer.

It is found in the cytoplasm. The catalysed reaction is malonyl-[ACP] + acetyl-CoA + H(+) = 3-oxobutanoyl-[ACP] + CO2 + CoA. It functions in the pathway lipid metabolism; fatty acid biosynthesis. Its function is as follows. Catalyzes the condensation reaction of fatty acid synthesis by the addition to an acyl acceptor of two carbons from malonyl-ACP. Catalyzes the first condensation reaction which initiates fatty acid synthesis and may therefore play a role in governing the total rate of fatty acid production. Possesses both acetoacetyl-ACP synthase and acetyl transacylase activities. Its substrate specificity determines the biosynthesis of branched-chain and/or straight-chain of fatty acids. This Burkholderia orbicola (strain AU 1054) protein is Beta-ketoacyl-[acyl-carrier-protein] synthase III.